The following is a 768-amino-acid chain: Vitamin B12-dependent ribonucleoside-diphosphate reductase (768 aa).

The region spanning 3–97 (KEVVKRDGTV…LYREKRRAIR (95 aa)) is the ATP-cone domain. Residues serine 234, 249-250 (AC), glycine 278, 432-436 (NPCGE), and 579-583 (PTGTI) each bind substrate. A disulfide bridge connects residues cysteine 250 and cysteine 445. Catalysis depends on asparagine 432, which acts as the Proton acceptor. Cysteine 434 serves as the catalytic Cysteine radical intermediate. Glutamate 436 serves as the catalytic Proton acceptor.

Belongs to the ribonucleoside diphosphate reductase class-2 family. Monomer. Adenosylcob(III)alamin is required as a cofactor.

It catalyses the reaction a 2'-deoxyribonucleoside 5'-diphosphate + [thioredoxin]-disulfide + H2O = a ribonucleoside 5'-diphosphate + [thioredoxin]-dithiol. Functionally, provides the precursors necessary for DNA synthesis. Catalyzes the biosynthesis of deoxyribonucleotides from the corresponding ribonucleotides. The polypeptide is Vitamin B12-dependent ribonucleoside-diphosphate reductase (Thermoplasma acidophilum (strain ATCC 25905 / DSM 1728 / JCM 9062 / NBRC 15155 / AMRC-C165)).